We begin with the raw amino-acid sequence, 101 residues long: NADH-quinone oxidoreductase subunit K (101 aa).

3 helical membrane-spanning segments follow: residues 4 to 24, 30 to 50, and 62 to 82; these read LGHL…GIFL, IVLL…FIAF, and FVFF…AILV.

Belongs to the complex I subunit 4L family. As to quaternary structure, NDH-1 is composed of 14 different subunits. Subunits NuoA, H, J, K, L, M, N constitute the membrane sector of the complex.

The protein resides in the cell inner membrane. It catalyses the reaction a quinone + NADH + 5 H(+)(in) = a quinol + NAD(+) + 4 H(+)(out). Functionally, NDH-1 shuttles electrons from NADH, via FMN and iron-sulfur (Fe-S) centers, to quinones in the respiratory chain. The immediate electron acceptor for the enzyme in this species is believed to be ubiquinone. Couples the redox reaction to proton translocation (for every two electrons transferred, four hydrogen ions are translocated across the cytoplasmic membrane), and thus conserves the redox energy in a proton gradient. The protein is NADH-quinone oxidoreductase subunit K of Xanthomonas axonopodis pv. citri (strain 306).